We begin with the raw amino-acid sequence, 552 residues long: Serine palmitoyltransferase 3 (552 aa).

The tract at residues 1-29 (MANPGGGAVCNGKLHNHKKQSNGSQSRNC) is disordered. The helical transmembrane segment at 59–79 (PLHVMVFTYMGYGIGTLFGYL) threads the bilayer. At K371 the chain carries N6-(pyridoxal phosphate)lysine.

It belongs to the class-II pyridoxal-phosphate-dependent aminotransferase family. As to quaternary structure, component of the serine palmitoyltransferase (SPT) complex, which is composed of SPTLC1, SPTLC2 or SPTLC3 and SPTSSA or SPTSSB. The heterodimer consisting of SPTLC1 and SPTLC2/SPTLC3 forms the catalytic core of the enzyme, while SPTSSA or SPTSSB subunits determine substrate specificity. SPT also interacts with ORMDL proteins, especially ORMDL3, which negatively regulate SPT activity in the presence of ceramides. Requires pyridoxal 5'-phosphate as cofactor. Expressed in most tissues, except peripheral blood cells and bone marrow, with highest levels in heart, kidney, liver, uterus and skin.

The protein localises to the endoplasmic reticulum membrane. The enzyme catalyses L-serine + hexadecanoyl-CoA + H(+) = 3-oxosphinganine + CO2 + CoA. The catalysed reaction is dodecanoyl-CoA + L-serine + H(+) = 3-oxotetradecasphinganine + CO2 + CoA. It carries out the reaction tetradecanoyl-CoA + L-serine + H(+) = 3-oxohexadecasphinganine + CO2 + CoA. It catalyses the reaction octadecanoyl-CoA + L-serine + H(+) = 3-oxoeicosasphinganine + CO2 + CoA. Its pathway is lipid metabolism; sphingolipid metabolism. Its activity is regulated as follows. SPT complex catalytic activity is negatively regulated by ORMDL proteins, including ORMDL3, in the presence of ceramides. This mechanism allows to maintain ceramide levels at sufficient concentrations for the production of complex sphingolipids, but which prevents the accumulation of ceramides to levels that trigger apoptosis. In terms of biological role, component of the serine palmitoyltransferase multisubunit enzyme (SPT) that catalyzes the initial and rate-limiting step in sphingolipid biosynthesis by condensing L-serine and activated acyl-CoA (most commonly palmitoyl-CoA) to form long-chain bases. The SPT complex is composed of SPTLC1, SPTLC2 or SPTLC3 and SPTSSA or SPTSSB. Within this complex, the heterodimer consisting of SPTLC1 and SPTLC2/SPTLC3 forms the catalytic core. The composition of the serine palmitoyltransferase (SPT) complex determines the substrate preference. The SPTLC1-SPTLC2-SPTSSA complex shows a strong preference for C16-CoA substrate, while the SPTLC1-SPTLC3-SPTSSA isozyme uses both C14-CoA and C16-CoA as substrates, with a slight preference for C14-CoA. The SPTLC1-SPTLC2-SPTSSB complex shows a strong preference for C18-CoA substrate, while the SPTLC1-SPTLC3-SPTSSB isozyme displays an ability to use a broader range of acyl-CoAs, without apparent preference. The sequence is that of Serine palmitoyltransferase 3 from Homo sapiens (Human).